A 218-amino-acid chain; its full sequence is MAKTSTSVIAAKTLVHAAALAPIALLGWQFWQVWQGGSDALGADPVAEIEHRTGLWALRFLLITLAITPLRQLTGQAVVIRFRRMLGLYAFFYASVHLAAYLTLDLRGFWTQIFEEILKRPYITVGFAAWLLLMPLAITSTQGWMRRLKRNWGRLHTLIYPIGLLAVLHFWWLVKSDIREPALYAGILAVLLGWRVWKKLSARRTTARRSTPPPATPR.

The next 5 helical transmembrane spans lie at 14-34 (LVHAAALAPIALLGWQFWQVW), 60-80 (FLLITLAITPLRQLTGQAVVI), 86-106 (LGLYAFFYASVHLAAYLTLDL), 121-141 (PYITVGFAAWLLLMPLAITST), and 155-175 (LHTLIYPIGLLAVLHFWWLVK).

The protein belongs to the MsrQ family. In terms of assembly, heterodimer of a catalytic subunit (MsrP) and a heme-binding subunit (MsrQ). FMN is required as a cofactor. It depends on heme b as a cofactor.

Its subcellular location is the cell inner membrane. Its function is as follows. Part of the MsrPQ system that repairs oxidized periplasmic proteins containing methionine sulfoxide residues (Met-O), using respiratory chain electrons. Thus protects these proteins from oxidative-stress damage caused by reactive species of oxygen and chlorine generated by the host defense mechanisms. MsrPQ is essential for the maintenance of envelope integrity under bleach stress, rescuing a wide series of structurally unrelated periplasmic proteins from methionine oxidation. MsrQ provides electrons for reduction to the reductase catalytic subunit MsrP, using the quinone pool of the respiratory chain. The polypeptide is Protein-methionine-sulfoxide reductase heme-binding subunit MsrQ (Xanthomonas euvesicatoria pv. vesicatoria (strain 85-10) (Xanthomonas campestris pv. vesicatoria)).